A 367-amino-acid chain; its full sequence is Peptidyl-prolyl cis-trans isomerase D (367 aa).

One can recognise a PPIase cyclophilin-type domain in the interval 7–171 (FFEVAIGGKT…QPVTIVDCGE (165 aa)). TPR repeat units follow at residues 213–246 (IEKLKSIGTKLFKEGNAEGALKKYLKATTYLEDY), 264–297 (ISCYLNVALMALKVNQPKVAIKAATSALDDETVA), and 302–335 (AKALFRRGSGYAALKNETDALKDLNAALELEPAD).

It belongs to the cyclophilin-type PPIase family. PPIase D subfamily.

It localises to the cytoplasm. The catalysed reaction is [protein]-peptidylproline (omega=180) = [protein]-peptidylproline (omega=0). PPIases accelerate the folding of proteins. It catalyzes the cis-trans isomerization of proline imidic peptide bonds in oligopeptides. The sequence is that of Peptidyl-prolyl cis-trans isomerase D (CPR6) from Yarrowia lipolytica (strain CLIB 122 / E 150) (Yeast).